Consider the following 501-residue polypeptide: NAD(P)H-quinone oxidoreductase chain 4, chloroplastic (501 aa).

Transmembrane regions (helical) follow at residues Phe4 to Leu24, Leu37 to Phe57, Ile87 to Ile107, Leu113 to Ala130, Ile134 to Met154, Phe167 to Leu187, Ile207 to Met227, His242 to Ile262, Ser274 to Thr294, Val310 to Gly330, Ala331 to Val351, Met364 to Ala384, Ser385 to Val405, Val416 to Met436, and Ile462 to Val482.

It belongs to the complex I subunit 4 family.

It localises to the plastid. It is found in the chloroplast thylakoid membrane. The catalysed reaction is a plastoquinone + NADH + (n+1) H(+)(in) = a plastoquinol + NAD(+) + n H(+)(out). The enzyme catalyses a plastoquinone + NADPH + (n+1) H(+)(in) = a plastoquinol + NADP(+) + n H(+)(out). In Anthoceros angustus (Hornwort), this protein is NAD(P)H-quinone oxidoreductase chain 4, chloroplastic (ndhD).